The following is a 319-amino-acid chain: Transmembrane and ubiquitin-like domain-containing protein 2 (319 aa).

Residues 36 to 56 form a helical membrane-spanning segment; the sequence is VMVVAGVVVLTLALVLAWLST. 2 disordered regions span residues 88–130 and 146–165; these read VNQG…GDME and QAGL…DSTC. Residues 95-111 show a composition bias toward basic and acidic residues; it reads PTEHPHPSGGSDDKAEE. Residues 173 to 246 enclose the Ubiquitin-like domain; sequence INVRLKFLND…IHCHRSPPGA (74 aa). The next 2 helical transmembrane spans lie at 264 to 284 and 293 to 313; these read LGVN…GVVW and FFTA…SFLV.

Its subcellular location is the membrane. This chain is Transmembrane and ubiquitin-like domain-containing protein 2 (Tmub2), found in Rattus norvegicus (Rat).